A 255-amino-acid chain; its full sequence is MRATAALRVELAADGRNVVRELRSQPPITLIPRRGVASAAGGPAVVHLVGSATSPMGGDRVDLRVHVGAGAALRLSGTAATVALPGQRTGHSRATVRIEVEAGGTVEYLPEATVVSGRADHRADMRVELAEHARARCREVLVLGRYGERPGVLTTSTHVVRAGTPLLRQRLDIGEQRLAASAGYLAGARVLAAETVVWDHDPAAPAGGQWWSLAPLSGGGALATSVAADAVTAQRGLAEALGHHPDAEALTRELW.

Belongs to the UreD family. In terms of assembly, ureD, UreF and UreG form a complex that acts as a GTP-hydrolysis-dependent molecular chaperone, activating the urease apoprotein by helping to assemble the nickel containing metallocenter of UreC. The UreE protein probably delivers the nickel.

The protein resides in the cytoplasm. Required for maturation of urease via the functional incorporation of the urease nickel metallocenter. The protein is Urease accessory protein UreD 1 of Saccharopolyspora erythraea (strain ATCC 11635 / DSM 40517 / JCM 4748 / NBRC 13426 / NCIMB 8594 / NRRL 2338).